Reading from the N-terminus, the 415-residue chain is Gamma-glutamyl phosphate reductase (415 aa).

This sequence belongs to the gamma-glutamyl phosphate reductase family.

The protein localises to the cytoplasm. It catalyses the reaction L-glutamate 5-semialdehyde + phosphate + NADP(+) = L-glutamyl 5-phosphate + NADPH + H(+). It participates in amino-acid biosynthesis; L-proline biosynthesis; L-glutamate 5-semialdehyde from L-glutamate: step 2/2. Catalyzes the NADPH-dependent reduction of L-glutamate 5-phosphate into L-glutamate 5-semialdehyde and phosphate. The product spontaneously undergoes cyclization to form 1-pyrroline-5-carboxylate. This chain is Gamma-glutamyl phosphate reductase, found in Mycolicibacterium gilvum (strain PYR-GCK) (Mycobacterium gilvum (strain PYR-GCK)).